A 373-amino-acid chain; its full sequence is Sorting nexin-21 (373 aa).

The segment at 1-107 is disordered; sequence MHRGTQEGAM…RSPPPDGQWG (107 aa). Positions 21-37 are enriched in low complexity; the sequence is ALAGDGPGEAAASPEAE. Polar residues predominate over residues 55-65; that stretch reads SRLSGTLSFTS. Residues 66 to 81 are compositionally biased toward acidic residues; sequence AEDDEDDEDEDDEEAG. In terms of domain architecture, PX spans 129–246; that stretch reads QRLLFEVTSA…DFFVLPELRR (118 aa). The a 1,2-diacyl-sn-glycero-3-phospho-(1D-myo-inositol-3-phosphate) site is built by R171, S173, K198, and R212.

The protein belongs to the sorting nexin family. As to quaternary structure, monomer. As to expression, highly expressed in fetus liver, but only weakly expressed in brain, skeleton muscle, smooth muscle, and cardiac muscle, kidney, and adrenal gland.

The protein resides in the cytoplasmic vesicle membrane. It is found in the early endosome membrane. Its function is as follows. Binds to membranes enriched in phosphatidylinositol 3-phosphate (PtdIns(P3)) and phosphatidylinositol 4,5-bisphosphate. May be involved in several stages of intracellular trafficking. The protein is Sorting nexin-21 (SNX21) of Homo sapiens (Human).